A 77-amino-acid chain; its full sequence is UPF0291 protein Bsph_1689 (77 aa).

The protein belongs to the UPF0291 family.

It is found in the cytoplasm. The polypeptide is UPF0291 protein Bsph_1689 (Lysinibacillus sphaericus (strain C3-41)).